A 368-amino-acid chain; its full sequence is Protein RecA (368 aa).

ATP is bound at residue 80 to 87 (GPESSGKT). A compositionally biased stretch (polar residues) spans 344–353 (NPTFTATPDS). The tract at residues 344–368 (NPTFTATPDSENADNADDEFSEEEL) is disordered. Positions 354 to 368 (ENADNADDEFSEEEL) are enriched in acidic residues.

Belongs to the RecA family.

The protein resides in the cytoplasm. In terms of biological role, can catalyze the hydrolysis of ATP in the presence of single-stranded DNA, the ATP-dependent uptake of single-stranded DNA by duplex DNA, and the ATP-dependent hybridization of homologous single-stranded DNAs. It interacts with LexA causing its activation and leading to its autocatalytic cleavage. This is Protein RecA from Mannheimia haemolytica (Pasteurella haemolytica).